We begin with the raw amino-acid sequence, 59 residues long: uncharacterized protein (59 aa).

A run of 2 helical transmembrane segments spans residues 1–21 (MNMY…YIFI) and 30–50 (GSWI…PYFY).

It localises to the cell membrane. This is an uncharacterized protein from Bacillus subtilis (strain 168).